The following is a 119-amino-acid chain: Ribonuclease P protein component (119 aa).

This sequence belongs to the RnpA family. As to quaternary structure, consists of a catalytic RNA component (M1 or rnpB) and a protein subunit.

The enzyme catalyses Endonucleolytic cleavage of RNA, removing 5'-extranucleotides from tRNA precursor.. Functionally, RNaseP catalyzes the removal of the 5'-leader sequence from pre-tRNA to produce the mature 5'-terminus. It can also cleave other RNA substrates such as 4.5S RNA. The protein component plays an auxiliary but essential role in vivo by binding to the 5'-leader sequence and broadening the substrate specificity of the ribozyme. This is Ribonuclease P protein component from Streptococcus pyogenes serotype M1.